The sequence spans 95 residues: Acylphosphatase (95 aa).

The Acylphosphatase-like domain occupies 7-93 (TWQLFAHGRV…QLFDRFDWLP (87 aa)). Active-site residues include Arg-22 and Asn-40.

Belongs to the acylphosphatase family.

It carries out the reaction an acyl phosphate + H2O = a carboxylate + phosphate + H(+). The protein is Acylphosphatase (acyP) of Cupriavidus metallidurans (strain ATCC 43123 / DSM 2839 / NBRC 102507 / CH34) (Ralstonia metallidurans).